The following is a 296-amino-acid chain: 5,10-methylenetetrahydrofolate reductase (296 aa).

Glutamate 28 (proton donor/acceptor) is an active-site residue. Threonine 59 contributes to the NADH binding site. FAD contacts are provided by tyrosine 60, alanine 62, histidine 88, arginine 118, glycine 119, aspartate 120, alanine 132, tyrosine 152, histidine 156, alanine 159, aspartate 165, asparagine 168, arginine 171, and lysine 172. (6S)-5-methyl-5,6,7,8-tetrahydrofolate is bound at residue aspartate 120. Glutamine 183 is an NADH binding site. Residues glutamine 183, glutamine 219, and arginine 279 each coordinate (6S)-5-methyl-5,6,7,8-tetrahydrofolate.

It belongs to the methylenetetrahydrofolate reductase family. The cofactor is FAD.

It catalyses the reaction (6S)-5-methyl-5,6,7,8-tetrahydrofolate + NAD(+) = (6R)-5,10-methylene-5,6,7,8-tetrahydrofolate + NADH + H(+). Its pathway is one-carbon metabolism; tetrahydrofolate interconversion. It participates in amino-acid biosynthesis; L-methionine biosynthesis via de novo pathway. Functionally, catalyzes the NADH-dependent reduction of 5,10-methylenetetrahydrofolate to 5-methyltetrahydrofolate. Is required to provide the methyl group necessary for methionine synthetase to convert homocysteine to methionine; the methyl group is given by 5-methyltetrahydrofolate. The protein is 5,10-methylenetetrahydrofolate reductase (metF) of Salmonella typhimurium (strain LT2 / SGSC1412 / ATCC 700720).